Here is a 208-residue protein sequence, read N- to C-terminus: Large ribosomal subunit protein uL3 (208 aa).

Position 149 is an N5-methylglutamine (Q149).

This sequence belongs to the universal ribosomal protein uL3 family. As to quaternary structure, part of the 50S ribosomal subunit. Forms a cluster with proteins L14 and L19. In terms of processing, methylated by PrmB.

One of the primary rRNA binding proteins, it binds directly near the 3'-end of the 23S rRNA, where it nucleates assembly of the 50S subunit. This is Large ribosomal subunit protein uL3 from Actinobacillus pleuropneumoniae serotype 5b (strain L20).